Here is a 273-residue protein sequence, read N- to C-terminus: Diaminopimelate epimerase (273 aa).

The substrate site is built by asparagine 11 and asparagine 60. Cysteine 69 serves as the catalytic Proton donor. Residues 70–71, asparagine 181, and 199–200 contribute to the substrate site; these read GN and ER. Cysteine 209 (proton acceptor) is an active-site residue. 210 to 211 provides a ligand contact to substrate; that stretch reads GT.

This sequence belongs to the diaminopimelate epimerase family. Homodimer.

Its subcellular location is the cytoplasm. It catalyses the reaction (2S,6S)-2,6-diaminopimelate = meso-2,6-diaminopimelate. Its pathway is amino-acid biosynthesis; L-lysine biosynthesis via DAP pathway; DL-2,6-diaminopimelate from LL-2,6-diaminopimelate: step 1/1. Catalyzes the stereoinversion of LL-2,6-diaminopimelate (L,L-DAP) to meso-diaminopimelate (meso-DAP), a precursor of L-lysine and an essential component of the bacterial peptidoglycan. This is Diaminopimelate epimerase from Helicobacter pylori (strain HPAG1).